A 204-amino-acid chain; its full sequence is Thymidylate kinase (204 aa).

Position 9-16 (9-16) interacts with ATP; it reads GIEASGKT.

Belongs to the thymidylate kinase family.

The enzyme catalyses dTMP + ATP = dTDP + ADP. Functionally, phosphorylation of dTMP to form dTDP in both de novo and salvage pathways of dTTP synthesis. The chain is Thymidylate kinase from Sulfurihydrogenibium sp. (strain YO3AOP1).